We begin with the raw amino-acid sequence, 207 residues long: ATP synthase subunit b (207 aa).

The first 27 residues, 1–27, serve as a signal peptide directing secretion; that stretch reads MKLRATFVFKTTLVALSFALFALFLVS. A lipid anchor (N-palmitoyl cysteine) is attached at Cys-28. Cys-28 carries the S-diacylglycerol cysteine lipid modification. The helical transmembrane segment at 49–69 threads the bilayer; sequence WVFLAHLLAFVILLFLLLFLF.

This sequence belongs to the ATPase B chain family. F-type ATPases have 2 components, F(1) - the catalytic core - and F(0) - the membrane proton channel. F(1) has five subunits: alpha(3), beta(3), gamma(1), delta(1), epsilon(1). F(0) has three main subunits: a(1), b(2) and c(10-14). The alpha and beta chains form an alternating ring which encloses part of the gamma chain. F(1) is attached to F(0) by a central stalk formed by the gamma and epsilon chains, while a peripheral stalk is formed by the delta and b chains.

Its subcellular location is the cell membrane. Its function is as follows. F(1)F(0) ATP synthase produces ATP from ADP in the presence of a proton or sodium gradient. F-type ATPases consist of two structural domains, F(1) containing the extramembraneous catalytic core and F(0) containing the membrane proton channel, linked together by a central stalk and a peripheral stalk. During catalysis, ATP synthesis in the catalytic domain of F(1) is coupled via a rotary mechanism of the central stalk subunits to proton translocation. In terms of biological role, component of the F(0) channel, it forms part of the peripheral stalk, linking F(1) to F(0). The sequence is that of ATP synthase subunit b from Mycoplasma pneumoniae (strain ATCC 29342 / M129 / Subtype 1) (Mycoplasmoides pneumoniae).